The chain runs to 25 residues: Caerin-1.7 (25 aa).

Leu25 bears the Leucine amide mark.

It belongs to the frog skin active peptide (FSAP) family. Caerin subfamily. Caerin-1.7.1 does not have any antibacterial activity. In terms of tissue distribution, expressed by the skin dorsal glands.

It localises to the secreted. Functionally, antibacterial peptide, that adopts an alpha helical conformation which can disrupt bacterial membranes. Each caerin displays a different antimicrobial specificity. The polypeptide is Caerin-1.7 (Ranoidea xanthomera (Northern orange-eyed tree frog)).